A 252-amino-acid chain; its full sequence is Small ribosomal subunit protein eS1B (252 aa).

The residue at position 2 (Ala-2) is an N-acetylalanine; partial. Residue Ser-251 is modified to Phosphoserine.

This sequence belongs to the eukaryotic ribosomal protein eS1 family. As to quaternary structure, component of the small ribosomal subunit (SSU). Mature yeast ribosomes consist of a small (40S) and a large (60S) subunit. The 40S small subunit contains 1 molecule of ribosomal RNA (18S rRNA) and at least 33 different proteins. The large 60S subunit contains 3 rRNA molecules (25S, 5.8S and 5S rRNA) and at least 46 different proteins. eS1 interacts directly with uS11 and eS26, which form part of the mRNA exit tunnel.

It is found in the cytoplasm. Component of the ribosome, a large ribonucleoprotein complex responsible for the synthesis of proteins in the cell. The small ribosomal subunit (SSU) binds messenger RNAs (mRNAs) and translates the encoded message by selecting cognate aminoacyl-transfer RNA (tRNA) molecules. The large subunit (LSU) contains the ribosomal catalytic site termed the peptidyl transferase center (PTC), which catalyzes the formation of peptide bonds, thereby polymerizing the amino acids delivered by tRNAs into a polypeptide chain. The nascent polypeptides leave the ribosome through a tunnel in the LSU and interact with protein factors that function in enzymatic processing, targeting, and the membrane insertion of nascent chains at the exit of the ribosomal tunnel. The chain is Small ribosomal subunit protein eS1B (rps102) from Schizosaccharomyces pombe (strain 972 / ATCC 24843) (Fission yeast).